The primary structure comprises 256 residues: Ribosomal RNA small subunit methyltransferase A (256 aa).

S-adenosyl-L-methionine is bound by residues Asn-12, Leu-14, Gly-39, Glu-60, Asp-85, and Asn-103.

This sequence belongs to the class I-like SAM-binding methyltransferase superfamily. rRNA adenine N(6)-methyltransferase family. RsmA subfamily.

The protein resides in the cytoplasm. The enzyme catalyses adenosine(1518)/adenosine(1519) in 16S rRNA + 4 S-adenosyl-L-methionine = N(6)-dimethyladenosine(1518)/N(6)-dimethyladenosine(1519) in 16S rRNA + 4 S-adenosyl-L-homocysteine + 4 H(+). Its function is as follows. Specifically dimethylates two adjacent adenosines (A1518 and A1519) in the loop of a conserved hairpin near the 3'-end of 16S rRNA in the 30S particle. May play a critical role in biogenesis of 30S subunits. The protein is Ribosomal RNA small subunit methyltransferase A of Legionella pneumophila (strain Lens).